A 662-amino-acid chain; its full sequence is Junctophilin-1 (662 aa).

Over 1 to 640 (MTGGRFDFDD…EREANSGPNS (640 aa)) the chain is Cytoplasmic. MORN repeat units lie at residues 14–36 (YCGGWEEGKAHGHGICTGPKGQG), 38–59 (YSGSWSHGFEVVGGYTWPSGNT), 60–82 (YQGYWAQGKRHGLGVETKGKWMY), 106–128 (YEGTWSNGLQDGYGVETYGDGGT), and 129–151 (YQGQWAGGMRHGYGVRQSVPYGM). S157, S216, and S220 each carry phosphoserine. The interval 228-247 (SKSSISSKRSSVRSDAAMSR) is disordered. MORN repeat units follow at residues 281–303 (YMGEWKNDKRNGFGISERSNGMK) and 304–326 (YEGEWANNKRHGYGCTVFPDGSK). Residues 432 to 443 (VDAKENPEEKVP) are compositionally biased toward basic and acidic residues. Residues 432–634 (VDAKENPEEK…DSCPSMEREA (203 aa)) form a disordered region. Position 448 is a phosphothreonine (T448). At S452 the chain carries Phosphoserine. Position 461 is a phosphothreonine (T461). Residues S465, S469, and S475 each carry the phosphoserine modification. The span at 584 to 599 (KPSPNKWSPPKSVTKP) shows a compositional bias: low complexity. Residues 600 to 614 (VAKESKAEPKAKKSE) show a composition bias toward basic and acidic residues. The helical; Anchor for type IV membrane protein transmembrane segment at 641–661 (VMIVLVMLLNIGLAILFVHFL) threads the bilayer.

It belongs to the junctophilin family.

It localises to the cell membrane. The protein resides in the endoplasmic reticulum membrane. Its subcellular location is the sarcoplasmic reticulum membrane. Junctophilins contribute to the formation of junctional membrane complexes (JMCs) which link the plasma membrane with the endoplasmic or sarcoplasmic reticulum in excitable cells. Provides a structural foundation for functional cross-talk between the cell surface and intracellular calcium release channels. JPH1 contributes to the construction of the skeletal muscle triad by linking the t-tubule (transverse-tubule) and SR (sarcoplasmic reticulum) membranes. This is Junctophilin-1 (JPH1) from Oryctolagus cuniculus (Rabbit).